The chain runs to 157 residues: Transcription elongation factor GreA (157 aa).

The stretch at 46–67 forms a coiled coil; the sequence is AEYHAARERQSFIEGRIKELED.

This sequence belongs to the GreA/GreB family.

Necessary for efficient RNA polymerase transcription elongation past template-encoded arresting sites. The arresting sites in DNA have the property of trapping a certain fraction of elongating RNA polymerases that pass through, resulting in locked ternary complexes. Cleavage of the nascent transcript by cleavage factors such as GreA or GreB allows the resumption of elongation from the new 3'terminus. GreA releases sequences of 2 to 3 nucleotides. The chain is Transcription elongation factor GreA from Rhodospirillum rubrum (strain ATCC 11170 / ATH 1.1.1 / DSM 467 / LMG 4362 / NCIMB 8255 / S1).